A 1828-amino-acid chain; its full sequence is Protein TIC 214 (1828 aa).

Helical transmembrane passes span 18-38, 64-84, 87-107, 124-144, 172-192, and 222-242; these read IINSVVVVGLYYGFLTTFSIG, FITGQLMIFISIYYAPLHLAM, PYTITVLGLPYLLFHFFWKNH, FSIQSIFLNNFIFQLLNHFVL, VGWLIGHILFMKWVGLILFWI, and VNIFLFITCVYYLGRIPSPIL. The segment covering 270–279 has biased composition (basic and acidic residues); it reads SEAKETKQEQ. Disordered stretches follow at residues 270–301, 618–637, 741–763, and 1533–1571; these read SEAKETKQEQKGSFAEEDSSLGSEEREDPNKL, DLQQQERENEEESTEDHAIR, EFKTSNSDEKETKEKEKKREDKK, and KEEFGQGNLGSDTQNQQKDVEKDYAKSDIKKRGKKRQSK. Over residues 1550 to 1562 the composition is skewed to basic and acidic residues; sequence KDVEKDYAKSDIK.

It belongs to the TIC214 family. Part of the Tic complex.

The protein localises to the plastid. Its subcellular location is the chloroplast inner membrane. Functionally, involved in protein precursor import into chloroplasts. May be part of an intermediate translocation complex acting as a protein-conducting channel at the inner envelope. This Calycanthus floridus var. glaucus (Eastern sweetshrub) protein is Protein TIC 214.